A 200-amino-acid chain; its full sequence is MAHGPRYRVPFRRRREGKTNYHKRLALLKSGKPRLVVRKTLNHHVAQIVLYAPEGDKTVVSAHTRELMRDFGWKGHGGNTPSAYLLGLLIGYKALEKGIEEAILDIGLHPPTKGSSIFAVLKGAVDAGLNVPHSEEIYPGEERINGKHIAEYAKMLKEDDENYKKQFGGYLVKGLEPEKLPEHFEEVKARIIEKFEKVRA.

The protein belongs to the universal ribosomal protein uL18 family. As to quaternary structure, part of the 50S ribosomal subunit. Contacts the 5S and 23S rRNAs.

Functionally, this is one of the proteins that bind and probably mediate the attachment of the 5S RNA into the large ribosomal subunit, where it forms part of the central protuberance. This Thermococcus sibiricus (strain DSM 12597 / MM 739) protein is Large ribosomal subunit protein uL18.